The sequence spans 231 residues: L-ribulose-5-phosphate 4-epimerase SgbE (231 aa).

Substrate contacts are provided by residues 27 to 28 (GN), 44 to 45 (SG), and 74 to 75 (SS). Zn(2+) contacts are provided by aspartate 76, histidine 95, and histidine 97. Aspartate 120 acts as the Proton donor/acceptor in catalysis. Position 171 (histidine 171) interacts with Zn(2+). Tyrosine 229 functions as the Proton donor/acceptor in the catalytic mechanism.

Belongs to the aldolase class II family. AraD/FucA subfamily. Requires Zn(2+) as cofactor.

The catalysed reaction is L-ribulose 5-phosphate = D-xylulose 5-phosphate. Catalyzes the interconversion of L-ribulose 5-phosphate (LRu5P) and D-xylulose 5-phosphate (D-Xu5P) via a retroaldol/aldol mechanism (carbon-carbon bond cleavage analogous to a class II aldolase reaction). May be involved in the utilization of 2,3-diketo-L-gulonate. In Escherichia coli (strain K12), this protein is L-ribulose-5-phosphate 4-epimerase SgbE.